The sequence spans 418 residues: Flavin-dependent L-tryptophan oxidase VioA (418 aa).

Residue Gly-13 coordinates Mg(2+). Ser-15 provides a ligand contact to FAD. A Mg(2+)-binding site is contributed by Gly-16. 3 residues coordinate FAD: Asp-38, Arg-46, and Arg-64. Substrate is bound by residues Arg-64 and His-163. Residue Leu-208 coordinates FAD. A Mg(2+)-binding site is contributed by Ala-240. Tyr-309 serves as a coordination point for substrate. Met-398 is an FAD binding site.

It belongs to the flavin monoamine oxidase family. Homodimer. It depends on FAD as a cofactor. The cofactor is Mg(2+).

The catalysed reaction is L-tryptophan + O2 = 2-iminio-3-(indol-3-yl)propanoate + H2O2. It catalyses the reaction 7-chloro-L-tryptophan + O2 = 3-(7-chloroindol-3-yl)-2-iminopropanoate + H2O2. It participates in pigment biosynthesis; violacein biosynthesis. Functionally, the enzyme generates the imine form of indole 3-pyruvate (IPA) from L-tryptophan (L-Trp), with concomitant two-electron reduction of O(2) to H(2)O(2). In Chromobacterium violaceum (strain ATCC 12472 / DSM 30191 / JCM 1249 / CCUG 213 / NBRC 12614 / NCIMB 9131 / NCTC 9757 / MK), this protein is Flavin-dependent L-tryptophan oxidase VioA (vioA).